Reading from the N-terminus, the 488-residue chain is Cobyric acid synthase (488 aa).

Positions 248–441 (VLRVVVPALP…VHGLFDAPDA (194 aa)) constitute a GATase cobBQ-type domain. Cys-328 (nucleophile) is an active-site residue. His-433 is a catalytic residue.

This sequence belongs to the CobB/CobQ family. CobQ subfamily.

It participates in cofactor biosynthesis; adenosylcobalamin biosynthesis. In terms of biological role, catalyzes amidations at positions B, D, E, and G on adenosylcobyrinic A,C-diamide. NH(2) groups are provided by glutamine, and one molecule of ATP is hydrogenolyzed for each amidation. The protein is Cobyric acid synthase of Burkholderia ambifaria (strain ATCC BAA-244 / DSM 16087 / CCUG 44356 / LMG 19182 / AMMD) (Burkholderia cepacia (strain AMMD)).